We begin with the raw amino-acid sequence, 499 residues long: L-arabinose isomerase (499 aa).

Positions 306, 333, 350, and 449 each coordinate Mn(2+).

This sequence belongs to the arabinose isomerase family. It depends on Mn(2+) as a cofactor.

It carries out the reaction beta-L-arabinopyranose = L-ribulose. Its pathway is carbohydrate degradation; L-arabinose degradation via L-ribulose; D-xylulose 5-phosphate from L-arabinose (bacterial route): step 1/3. Its function is as follows. Catalyzes the conversion of L-arabinose to L-ribulose. This chain is L-arabinose isomerase, found in Aeromonas salmonicida (strain A449).